The chain runs to 23 residues: Endochitinase B (23 aa).

The protein belongs to the glycosyl hydrolase 19 family. Chitinase class I subfamily.

The enzyme catalyses Random endo-hydrolysis of N-acetyl-beta-D-glucosaminide (1-&gt;4)-beta-linkages in chitin and chitodextrins.. Defense against chitin-containing fungal pathogens. This Pisum sativum (Garden pea) protein is Endochitinase B.